Consider the following 427-residue polypeptide: MNYSRSELLFQEAQKAIPGGVNSPVRAFKSVGTDPLFIEKASGSRIYDVDGNEFIDYVGSWGPMILGHCHPQVVAAVKSAVDNGCSFGAPTELEITLAEMVIEAVPSIEMVRMVSSGTEATMSAIRLARGYTGRDKILKFSGCYHGHSDSLLVKAGSGAATFGVPDSPGVPQDFAKHTLTATYNDLESVNKLVAENKNQISCIIVEPVAGNMGTVPPREGFLEGLRSLCTEEGIVLIFDEVMSGFRVAYGGAQELYNVTPDMTTLGKIIGGGLPVGAFGGKKEIMSLLSPSGGVYQAGTLSGNPLAMTAGIETLKLLQTEGFYQDLDRKSDYVASGIAKAAKDAGFPIYSTRVGSMFCAFFSKKPVYDWTSAAACDTKAFAKYFRLMLDEGIYLAPSQFETAFVSIAHSTDDLDKTIAAAAKAFKSL.

Lys-267 bears the N6-(pyridoxal phosphate)lysine mark.

Belongs to the class-III pyridoxal-phosphate-dependent aminotransferase family. HemL subfamily. In terms of assembly, homodimer. Requires pyridoxal 5'-phosphate as cofactor.

Its subcellular location is the cytoplasm. It carries out the reaction (S)-4-amino-5-oxopentanoate = 5-aminolevulinate. Its pathway is porphyrin-containing compound metabolism; protoporphyrin-IX biosynthesis; 5-aminolevulinate from L-glutamyl-tRNA(Glu): step 2/2. The chain is Glutamate-1-semialdehyde 2,1-aminomutase from Geotalea uraniireducens (strain Rf4) (Geobacter uraniireducens).